Here is a 249-residue protein sequence, read N- to C-terminus: Ribosomal RNA small subunit methyltransferase J (249 aa).

Asp-169 contributes to the S-adenosyl-L-methionine binding site.

Belongs to the methyltransferase superfamily. RsmJ family.

It localises to the cytoplasm. It carries out the reaction guanosine(1516) in 16S rRNA + S-adenosyl-L-methionine = N(2)-methylguanosine(1516) in 16S rRNA + S-adenosyl-L-homocysteine + H(+). Functionally, specifically methylates the guanosine in position 1516 of 16S rRNA. The sequence is that of Ribosomal RNA small subunit methyltransferase J from Buchnera aphidicola subsp. Schizaphis graminum (strain Sg).